Consider the following 212-residue polypeptide: MNSQQCVIIAIAGASASGKSLIAKTIFDELRRDLGTDQIGVINEDAYYRDQSHLSMDERVLTNYDHPKALDHQLLCTHLQLLKSGEAVDIPCYSYTEHTRTADTVTMTPKKVIILEGILLLTDPKLRELMDASVFMDTPLDICFLRRLTRDVAERGRTMESVISQYKKTVRPMFLQFIEPSKQYADIIVPRGGKNRIATDILKTRIQHLLAK.

13-20 is an ATP binding site; that stretch reads GASASGKS.

It belongs to the uridine kinase family.

The protein resides in the cytoplasm. The catalysed reaction is uridine + ATP = UMP + ADP + H(+). The enzyme catalyses cytidine + ATP = CMP + ADP + H(+). It participates in pyrimidine metabolism; CTP biosynthesis via salvage pathway; CTP from cytidine: step 1/3. The protein operates within pyrimidine metabolism; UMP biosynthesis via salvage pathway; UMP from uridine: step 1/1. This chain is Uridine kinase, found in Shewanella putrefaciens (strain CN-32 / ATCC BAA-453).